Here is a 294-residue protein sequence, read N- to C-terminus: RNA polymerase sigma-K factor (294 aa).

Positions 1 to 20 (MVTGVFAALGFVVKELVFLV) are excised as a propeptide. An encoded by spoIVCB region spans residues 1–156 (MVTGVFAALG…VNNCFFIFKS (156 aa)). The short motif at 79–92 (DLISIGTIGLIKGI) is the Polymerase core binding element. Positions 114–165 (EIVITKGGCIHPSLIRFNIYGVRIHNGNFFHDKVNNCFFIFKSMPPLFVMNN) are not present in recombined mature factor. An encoded by spoIIIC region spans residues 157–294 (MPPLFVMNNE…KEKRKKAKGK (138 aa)). The segment at residues 251–270 (QREIAKELGISRSYVSRIEK) is a DNA-binding region (H-T-H motif).

Belongs to the sigma-70 factor family.

Sigma factors are initiation factors that promote the attachment of RNA polymerase to specific initiation sites and are then released. This sigma factor is responsible for the expression of sporulation specific genes in the mother cell. The sequence is that of RNA polymerase sigma-K factor (sigK) from Bacillus subtilis (strain 168).